A 42-amino-acid chain; its full sequence is Tachystatin-B2 (42 aa).

3 disulfides stabilise this stretch: Cys-4–Cys-20, Cys-11–Cys-25, and Cys-19–Cys-37.

In terms of tissue distribution, granular hemocytes, small secretory granules.

The protein resides in the secreted. In terms of biological role, exhibits stronger antimicrobial activity against the Gram-positive bacteria (S.aureus (IC(50) is 7.4 ug/ml)) and fungi (C.albicans (IC(50) is 3.0 ug/ml) and P.pastoris (IC(50) is 0.1 ug/ml)) than Gram-negative bacteria (E.coli no inhibition at 100 ug/ml). Binds to chitin (4.3 uM are required to obtain 50% of binding). Does not cause hemolysis on sheep erythrocytes. Has no blocking activity on the P-type calcium channel. This chain is Tachystatin-B2, found in Tachypleus tridentatus (Japanese horseshoe crab).